The following is a 982-amino-acid chain: Coatomer subunit beta (982 aa).

HEAT repeat units follow at residues 16-53 (SGAP…NGEP), 130-167 (ELVE…RFPE), 241-278 (YDKG…SPTA), and 317-352 (LQDS…NQNS).

Oligomeric complex that consists of at least the alpha, beta, beta', gamma, delta, epsilon and zeta subunits.

It is found in the cytoplasm. Its subcellular location is the golgi apparatus membrane. The protein resides in the cytoplasmic vesicle. It localises to the COPI-coated vesicle membrane. The coatomer is a cytosolic protein complex that binds to dilysine motifs and reversibly associates with Golgi non-clathrin-coated vesicles, which further mediate biosynthetic protein transport from the ER, via the Golgi up to the trans Golgi network. Coatomer complex is required for budding from Golgi membranes, and is essential for the retrograde Golgi-to-ER transport of dilysine-tagged proteins. In Trypanosoma brucei brucei, this protein is Coatomer subunit beta.